The chain runs to 390 residues: GTPase Obg/CgtA (390 aa).

The Obg domain occupies 1 to 159 (MKFVDEAVIK…RDIRLELLLL (159 aa)). The OBG-type G domain occupies 160–333 (ADVGMLGMPN…LCMKLAEFMD (174 aa)). Residues 166-173 (GMPNAGKS), 191-195 (FTTLV), 213-216 (DIPG), 283-286 (NKVD), and 314-316 (SAA) each bind GTP. Mg(2+) contacts are provided by serine 173 and threonine 193.

This sequence belongs to the TRAFAC class OBG-HflX-like GTPase superfamily. OBG GTPase family. As to quaternary structure, monomer. Interacts with SpoT (AC Q9KNM2) in a yeast 2-hybrid assay. Mg(2+) serves as cofactor.

Its subcellular location is the cytoplasm. Depletion experiments lead to gene down regulation and a dramatic increase in ppGpp levels, like those seen in the stringent response. There is no change in cell morphology in depletion experiments, but cells are very sensitive to the DNA-damaging agent hydroxyurea and are very elongated. Overexpression reduces growth and leads to elongated cells. Overexpression of proteins with C-terminal deletions of 29 or 62 amino acids showed fewer elongated cells. In terms of biological role, an essential GTPase which binds GTP, GDP and possibly (p)ppGpp with moderate affinity, with high nucleotide exchange rates and a fairly low GTP hydrolysis rate. It may play a role in control of the cell cycle, stress response, ribosome biogenesis and in those bacteria that undergo differentiation, in morphogenesis control. GTPase activity is stimulated by 50S ribosomal subunits. In Vibrio cholerae serotype O1 (strain ATCC 39315 / El Tor Inaba N16961), this protein is GTPase Obg/CgtA.